A 189-amino-acid polypeptide reads, in one-letter code: Transcription factor E (189 aa).

The HTH TFE/IIEalpha-type domain maps to 9 to 101 (AVKSLEIYVR…FWRIDSDTIN (93 aa)).

The protein belongs to the TFE family. As to quaternary structure, monomer. Interaction with RNA polymerase subunits RpoF and RpoE is necessary for Tfe stimulatory transcription activity. Able to interact with Tbp and RNA polymerase in the absence of DNA promoter. Interacts both with the preinitiation and elongation complexes.

Transcription factor that plays a role in the activation of archaeal genes transcribed by RNA polymerase. Facilitates transcription initiation by enhancing TATA-box recognition by TATA-box-binding protein (Tbp), and transcription factor B (Tfb) and RNA polymerase recruitment. Not absolutely required for transcription in vitro, but particularly important in cases where Tbp or Tfb function is not optimal. It dynamically alters the nucleic acid-binding properties of RNA polymerases by stabilizing the initiation complex and destabilizing elongation complexes. Seems to translocate with the RNA polymerase following initiation and acts by binding to the non template strand of the transcription bubble in elongation complexes. This is Transcription factor E from Aeropyrum pernix (strain ATCC 700893 / DSM 11879 / JCM 9820 / NBRC 100138 / K1).